Consider the following 478-residue polypeptide: Putative sulfate transporter YbaR (478 aa).

A run of 12 helical transmembrane segments spans residues 19 to 39, 42 to 62, 65 to 85, 87 to 107, 121 to 141, 143 to 163, 168 to 188, 220 to 240, 259 to 279, 295 to 315, 345 to 365, and 366 to 386; these read ILAGILVALALIPEAIGFSII, VDPMVGLYASFCIAIIISIFG, PGMISAATGSMAVVMVSLVAD, GLQYLFAATILTGIIQVILGI, VMIGFVNALAILIFSAQLPQF, GASWSMYAMLAGSLVIIYVLP, AVPSPLVAIIVMTIIAVTFHV, IIFPYSIALAFVGLLESLLTA, GQGIANIVTGFFGGMAGCAMI, SAFVAGAFLMFLIAVLSHVVV, APLTDSIVMVVTVVTVVVTDD, and LSKGVFVGVLLSAVFFVAKIS. One can recognise an STAS domain in the interval 389–478; the sequence is KIVSHAEDQK…ASKSLMKQMA (90 aa).

It belongs to the SLC26A/SulP transporter (TC 2.A.53) family.

The protein localises to the cell membrane. This Bacillus subtilis (strain 168) protein is Putative sulfate transporter YbaR (ybaR).